The sequence spans 167 residues: 3-dehydroquinate dehydratase (167 aa).

The Proton acceptor role is filled by tyrosine 22. Residues asparagine 76, histidine 82, and aspartate 89 each coordinate substrate. Catalysis depends on histidine 102, which acts as the Proton donor. Residues 103 to 104 (LT) and arginine 113 each bind substrate.

Belongs to the type-II 3-dehydroquinase family. As to quaternary structure, homododecamer.

The catalysed reaction is 3-dehydroquinate = 3-dehydroshikimate + H2O. It participates in metabolic intermediate biosynthesis; chorismate biosynthesis; chorismate from D-erythrose 4-phosphate and phosphoenolpyruvate: step 3/7. Catalyzes a trans-dehydration via an enolate intermediate. The protein is 3-dehydroquinate dehydratase of Helicobacter pylori (strain Shi470).